Here is a 239-residue protein sequence, read N- to C-terminus: Geranylgeranylglyceryl phosphate synthase (239 aa).

Lys-13 serves as a coordination point for sn-glycerol 1-phosphate. Residues Asp-15 and Thr-42 each coordinate Mg(2+). Sn-glycerol 1-phosphate contacts are provided by residues 162–167 (YIEYSG), Gly-192, and 212–213 (GD).

The protein belongs to the GGGP/HepGP synthase family. Group I subfamily. Mg(2+) serves as cofactor.

Its subcellular location is the cytoplasm. The catalysed reaction is sn-glycerol 1-phosphate + (2E,6E,10E)-geranylgeranyl diphosphate = sn-3-O-(geranylgeranyl)glycerol 1-phosphate + diphosphate. It functions in the pathway membrane lipid metabolism; glycerophospholipid metabolism. Its function is as follows. Prenyltransferase that catalyzes the transfer of the geranylgeranyl moiety of geranylgeranyl diphosphate (GGPP) to the C3 hydroxyl of sn-glycerol-1-phosphate (G1P). This reaction is the first ether-bond-formation step in the biosynthesis of archaeal membrane lipids. The polypeptide is Geranylgeranylglyceryl phosphate synthase (Haloquadratum walsbyi (strain DSM 16790 / HBSQ001)).